The following is a 273-amino-acid chain: Trypsin-6 (273 aa).

Residues 1 to 22 (MLSKFTAILLAVHIALFACALT) form the signal peptide. Residues 23 to 46 (QAEKRHKLTRPAFHPNAPYLAGKR) constitute a propeptide, activation peptide. The region spanning 47–272 (IVGGFVIDIS…VRDWIRETSG (226 aa)) is the Peptidase S1 domain. A disulfide bond links Cys72 and Cys88. Active-site charge relay system residues include His87 and Asp132. 2 disulfide bridges follow: Cys197-Cys213 and Cys224-Cys248. Catalysis depends on Ser228, which acts as the Charge relay system.

It belongs to the peptidase S1 family. In terms of tissue distribution, expressed in the midgut. Expression levels drop a few hours after blood feeding and pick up again 28 hours later.

It is found in the secreted. It carries out the reaction Preferential cleavage: Arg-|-Xaa, Lys-|-Xaa.. Its function is as follows. Constitutive trypsin that is expressed 2 days after emergence, coinciding with host seeking behavior of the female. This is Trypsin-6 (TRYP6) from Anopheles gambiae (African malaria mosquito).